Here is a 410-residue protein sequence, read N- to C-terminus: MDTNTLLLILANIIVIIGLARLIGLLFARFQQPPVIGEIIAGIMLGPSLLGLLSPALEKSFFPATTQPFLYLLSEIGLIFYMFLVGLELNPQYLRQKLKVAILTSNVSIFFPFVLGIVLSFFVLYSLNQPNKTSFIPFALFIGAAMSITAFPVLARILKDTGLDKTPLGTLGLTCASVDDISAWCLLAIAIAVTRTDNIFGAFPTLLGIIVYTVFMVTLGRKFFKYILRNYGQKNYLSQGLLTFIYIMVILSAMLTEWIGIDVIFGGFILGAILPKNTNLSTELATKTEDFVSTFLLPIFFAYSGLSTDLGLLNKPYLWAVCALVVAAAIAGKYCGVYVTTRALGVEKQEAKALGWLMNTRGLTELIILNVGLKLGVISPVIFTMFVIMAIITTIITSPLVVKIYPAPAH.

11 helical membrane-spanning segments follow: residues 7–27, 33–53, 69–89, 107–127, 135–155, 173–193, 199–219, 241–261, 291–311, 319–339, and 376–396; these read LLIL…GLLF, PPVI…LGLL, FLYL…GLEL, VSIF…LYSL, FIPF…PVLA, LTCA…AIAV, IFGA…MVTL, LLTF…WIGI, FVST…TDLG, WAVC…GVYV, and GVIS…TTII.

This sequence belongs to the monovalent cation:proton antiporter 2 (CPA2) transporter (TC 2.A.37) family.

It is found in the membrane. Na(+)/H(+) antiporter. The polypeptide is Na(+)/H(+) antiporter NhaS4 (nhaS4) (Synechocystis sp. (strain ATCC 27184 / PCC 6803 / Kazusa)).